Here is a 247-residue protein sequence, read N- to C-terminus: Triosephosphate isomerase (247 aa).

Substrate is bound at residue 8-10 (NWK). Histidine 94 serves as the catalytic Electrophile. Glutamate 165 serves as the catalytic Proton acceptor. Residues glycine 171 and serine 210 each contribute to the substrate site.

The protein belongs to the triosephosphate isomerase family. As to quaternary structure, homodimer.

The protein resides in the cytoplasm. The enzyme catalyses D-glyceraldehyde 3-phosphate = dihydroxyacetone phosphate. The protein operates within carbohydrate biosynthesis; gluconeogenesis. It functions in the pathway carbohydrate degradation; glycolysis; D-glyceraldehyde 3-phosphate from glycerone phosphate: step 1/1. Involved in the gluconeogenesis. Catalyzes stereospecifically the conversion of dihydroxyacetone phosphate (DHAP) to D-glyceraldehyde-3-phosphate (G3P). The protein is Triosephosphate isomerase of Aquifex aeolicus (strain VF5).